A 306-amino-acid polypeptide reads, in one-letter code: Pantothenate kinase (306 aa).

91-98 (GSVAVGKS) serves as a coordination point for ATP.

This sequence belongs to the prokaryotic pantothenate kinase family.

It localises to the cytoplasm. It catalyses the reaction (R)-pantothenate + ATP = (R)-4'-phosphopantothenate + ADP + H(+). Its pathway is cofactor biosynthesis; coenzyme A biosynthesis; CoA from (R)-pantothenate: step 1/5. The sequence is that of Pantothenate kinase from Streptococcus thermophilus (strain CNRZ 1066).